Reading from the N-terminus, the 262-residue chain is Nodulation protein J (262 aa).

Residues 33–259 form the ABC transmembrane type-2 domain; that stretch reads ASILGNLADP…FLSTALLRRR (227 aa). The next 7 membrane-spanning stretches (helical) occupy residues 35-55, 62-82, 102-122, 127-147, 148-168, 177-197, and 231-251; these read ILGNLADPLIYLFGLGAGLGM, GVSYIAFLSAGMVATSAMTAS, AILHTQVTIGDIVLGELAWAA, LAGTGIGVVAATLGYTEWVSL, LYALPVIALTGLAFASLAMIV, YFIFYQTLVITPMLFLSGAVF, and LVHVGLHIGALCCYAVVPFFL.

The protein belongs to the ABC-2 integral membrane protein family. Lipooligosaccharide exporter (TC 3.A.1.102) subfamily. In terms of assembly, the complex is composed of two ATP-binding proteins (NodI) and two transmembrane proteins (NodJ).

Its subcellular location is the cell inner membrane. In terms of biological role, part of the ABC transporter complex NodIJ involved in the export of the nodulation factors (Nod factors), the bacterial signal molecules that induce symbiosis and subsequent nodulation induction. Nod factors are LCO (lipo-chitin oligosaccharide), a modified beta-1,4-linked N-acetylglucosamine oligosaccharide. This subunit encodes the transporter. This Rhizobium meliloti (strain 1021) (Ensifer meliloti) protein is Nodulation protein J (nodJ).